The following is a 429-amino-acid chain: Ribosomal RNA small subunit methyltransferase B (429 aa).

S-adenosyl-L-methionine-binding positions include 254-260, D277, D303, and D322; that span reads CAAPGGK. C375 serves as the catalytic Nucleophile.

It belongs to the class I-like SAM-binding methyltransferase superfamily. RsmB/NOP family.

It is found in the cytoplasm. The catalysed reaction is cytidine(967) in 16S rRNA + S-adenosyl-L-methionine = 5-methylcytidine(967) in 16S rRNA + S-adenosyl-L-homocysteine + H(+). Functionally, specifically methylates the cytosine at position 967 (m5C967) of 16S rRNA. The chain is Ribosomal RNA small subunit methyltransferase B from Erwinia tasmaniensis (strain DSM 17950 / CFBP 7177 / CIP 109463 / NCPPB 4357 / Et1/99).